Consider the following 356-residue polypeptide: Phospho-N-acetylmuramoyl-pentapeptide-transferase (356 aa).

The next 10 membrane-spanning stretches (helical) occupy residues 27-47 (AAVA…ILML), 73-93 (TMGG…WMDL), 97-117 (FVWA…LDDY), 134-154 (LLVE…RTGT), 163-183 (GIVI…IVGF), 195-215 (GLAT…VYLS), 232-252 (AGEL…FLWF), 258-278 (AVFM…TIAV), 285-305 (VLVL…IQVF), and 333-353 (TVVI…LATL).

The protein belongs to the glycosyltransferase 4 family. MraY subfamily. Requires Mg(2+) as cofactor.

The protein resides in the cell inner membrane. It carries out the reaction UDP-N-acetyl-alpha-D-muramoyl-L-alanyl-gamma-D-glutamyl-meso-2,6-diaminopimeloyl-D-alanyl-D-alanine + di-trans,octa-cis-undecaprenyl phosphate = di-trans,octa-cis-undecaprenyl diphospho-N-acetyl-alpha-D-muramoyl-L-alanyl-D-glutamyl-meso-2,6-diaminopimeloyl-D-alanyl-D-alanine + UMP. The protein operates within cell wall biogenesis; peptidoglycan biosynthesis. Its function is as follows. Catalyzes the initial step of the lipid cycle reactions in the biosynthesis of the cell wall peptidoglycan: transfers peptidoglycan precursor phospho-MurNAc-pentapeptide from UDP-MurNAc-pentapeptide onto the lipid carrier undecaprenyl phosphate, yielding undecaprenyl-pyrophosphoryl-MurNAc-pentapeptide, known as lipid I. In Sphingopyxis alaskensis (strain DSM 13593 / LMG 18877 / RB2256) (Sphingomonas alaskensis), this protein is Phospho-N-acetylmuramoyl-pentapeptide-transferase.